The sequence spans 429 residues: Forkhead box protein A1-A (429 aa).

Positions 159-253 (KPPYSYISLI…ENGCYLRRQK (95 aa)) form a DNA-binding region, fork-head. The segment covering 258-274 (EKTQGGKGNQDGRKDHS) has biased composition (basic and acidic residues). The disordered stretch occupies residues 258-341 (EKTQGGKGNQ…HSTHSLAHES (84 aa)). Positions 287 to 304 (SSQMDSSSSMSNPSSSPQ) are enriched in low complexity. Over residues 325–336 (PLSSHQNHSTHS) the composition is skewed to polar residues.

As to expression, at neurula stage, expressed in the notochord but not in the neural floor plate. During tailbud stages, expressed in the neural floor plate. At stage 35, expressed in the rhombencephalon, mesencephalon, pharyngeal pouches, foregut and pronephros. At stage 44, expressed in a region of the gut on the right hand side of the embryo. Expressed in the adult lung and liver.

The protein resides in the nucleus. Its function is as follows. Probable transcription factor. In Xenopus laevis (African clawed frog), this protein is Forkhead box protein A1-A (foxa1-a).